The chain runs to 542 residues: Glucans biosynthesis protein D (542 aa).

A signal peptide (tat-type signal) is located at residues 1–31 (MHRRNLLKASMAIAAYTGLSATGLLASRAWA).

This sequence belongs to the OpgD/OpgG family. In terms of processing, predicted to be exported by the Tat system. The position of the signal peptide cleavage has not been experimentally proven.

It localises to the periplasm. It participates in glycan metabolism; osmoregulated periplasmic glucan (OPG) biosynthesis. In terms of biological role, probably involved in the control of the structural glucose backbone of osmoregulated periplasmic glucans (OPGs). This chain is Glucans biosynthesis protein D, found in Pseudomonas fluorescens (strain Pf0-1).